The chain runs to 151 residues: Large ribosomal subunit protein bL9 (151 aa).

It belongs to the bacterial ribosomal protein bL9 family.

Binds to the 23S rRNA. In Bordetella petrii (strain ATCC BAA-461 / DSM 12804 / CCUG 43448), this protein is Large ribosomal subunit protein bL9.